The following is a 373-amino-acid chain: Putative glutamate--cysteine ligase 2-2 (373 aa).

The protein belongs to the glutamate--cysteine ligase type 2 family. YbdK subfamily.

The catalysed reaction is L-cysteine + L-glutamate + ATP = gamma-L-glutamyl-L-cysteine + ADP + phosphate + H(+). Functionally, ATP-dependent carboxylate-amine ligase which exhibits weak glutamate--cysteine ligase activity. This Legionella pneumophila (strain Corby) protein is Putative glutamate--cysteine ligase 2-2.